The sequence spans 762 residues: Centrosomal protein of 85 kDa (762 aa).

2 disordered regions span residues 1-26 (MAMQEKYPTEGISHVTSPSSDVIQKG) and 94-119 (VMPSTLGTSPAKPNSTPVGPSSSKLP). Polar residues-rich tracts occupy residues 14-26 (HVTSPSSDVIQKG) and 98-111 (TLGTSPAKPNSTPV). Ser17 is modified (phosphoserine). Ser126 and Ser141 each carry phosphoserine. Residues 257 to 433 (GLSKPLPSQV…QLIRESLKVA (177 aa)) form a mediates interaction with NEK2 and is required for its function in the suppression of centrosome disjunction region. Coiled-coil stretches lie at residues 334-657 (EHLL…RQAQ) and 723-750 (PDVIKRKLEEVQQLRRDIEDLRTTMSDR). Positions 434–476 (LQKHSEEVKKQEERVKGRDKHINNLKKKCQKESEQNREKQQRI) are required for centrosome localization and for its function in the suppression of centrosome disjunction. Basic and acidic residues-rich tracts occupy residues 443–455 (KQEERVKGRDKHI) and 463–474 (QKESEQNREKQQ). 2 disordered regions span residues 443–474 (KQEERVKGRDKHINNLKKKCQKESEQNREKQQ) and 541–570 (EAEFSSAGHSLQDKQSVEETSGEGPEVEME). Ser623 carries the phosphoserine modification.

The protein belongs to the CEP85 family. Homodimer. Interacts with STIL (via N-terminus); this interaction is essential for robust PLK4 activation and efficient centriole assembly and for PLK4-dependent cell migration. Interacts with PLK4; required for CEP85 to be able to drive centriole duplication and cell migration.

The protein resides in the cytoplasm. The protein localises to the cytoskeleton. It localises to the microtubule organizing center. It is found in the centrosome. Its subcellular location is the spindle pole. The protein resides in the nucleus. The protein localises to the nucleolus. It localises to the centriole. It is found in the cell cortex. Functionally, acts as a regulator of centriole duplication through a direct interaction with STIL, a key factor involved in the early steps of centriole formation. The CEP85-STIL protein complex acts as a modulator of PLK4-driven cytoskeletal rearrangements and directional cell motility. Acts as a negative regulator of NEK2 to maintain the centrosome integrity in interphase. Suppresses centrosome disjunction by inhibiting NEK2 kinase activity. The sequence is that of Centrosomal protein of 85 kDa from Homo sapiens (Human).